The sequence spans 698 residues: Elongation factor G 1 (698 aa).

In terms of domain architecture, tr-type G spans 8-290 (ERYRNIGIVA…AVVDFLPAPI (283 aa)). GTP is bound by residues 17–24 (AHVDAGKT), 88–92 (DTPGH), and 142–145 (NKMD).

This sequence belongs to the TRAFAC class translation factor GTPase superfamily. Classic translation factor GTPase family. EF-G/EF-2 subfamily.

It is found in the cytoplasm. Its function is as follows. Catalyzes the GTP-dependent ribosomal translocation step during translation elongation. During this step, the ribosome changes from the pre-translocational (PRE) to the post-translocational (POST) state as the newly formed A-site-bound peptidyl-tRNA and P-site-bound deacylated tRNA move to the P and E sites, respectively. Catalyzes the coordinated movement of the two tRNA molecules, the mRNA and conformational changes in the ribosome. This is Elongation factor G 1 from Shewanella frigidimarina (strain NCIMB 400).